The following is a 314-amino-acid chain: MAESLMDVKRRIDSTKKTHQITSAMQMVSTSKLNQIQKHTSTYQVYASKVESIVSHLAKAHLMSASAGVANSNSNTISVSELLAQRPVKKTGLLVITSDRGLVGSYNSNVLKQTNDFMRTHKVDADNAVVLAVGGTGADFYKKNGLNVAYEYRGVSDVPTFKEVREIVKTVTSMYHNEVFDELYVFYNHFINRLSSGFRAVKMLPISEETFEQSESDNRKAKDSRVDVGPEYEMEPSEEAILSAVLPQYAESLVYGAILDAKTAEHASSSTAMKAASDNAGDLIDKLNLKYNRARQAAITTEITEITGGLVAQE.

It belongs to the ATPase gamma chain family. As to quaternary structure, F-type ATPases have 2 components, CF(1) - the catalytic core - and CF(0) - the membrane proton channel. CF(1) has five subunits: alpha(3), beta(3), gamma(1), delta(1), epsilon(1). CF(0) has three main subunits: a, b and c.

Its subcellular location is the cell membrane. Produces ATP from ADP in the presence of a proton gradient across the membrane. The gamma chain is believed to be important in regulating ATPase activity and the flow of protons through the CF(0) complex. The protein is ATP synthase gamma chain of Lactiplantibacillus plantarum (strain ATCC BAA-793 / NCIMB 8826 / WCFS1) (Lactobacillus plantarum).